The following is a 347-amino-acid chain: Bifunctional methylenetetrahydrofolate dehydrogenase/cyclohydrolase 2, mitochondrial (347 aa).

Residues 98–102 and 145–147 each bind substrate; these read YVRNK and VQL. NAD(+) contacts are provided by residues 214-216 and Arg-247; that span reads GRS. Substrate is bound at residue 323-327; it reads PGGVG.

The protein belongs to the tetrahydrofolate dehydrogenase/cyclohydrolase family. Requires Mg(2+) as cofactor. As to expression, isoform 1, isoform 4 and isoform 5 are expressed in brain and placenta.

The protein resides in the mitochondrion inner membrane. It carries out the reaction (6R)-5,10-methylene-5,6,7,8-tetrahydrofolate + NAD(+) = (6R)-5,10-methenyltetrahydrofolate + NADH. The catalysed reaction is (6R)-5,10-methenyltetrahydrofolate + H2O = (6R)-10-formyltetrahydrofolate + H(+). The enzyme catalyses (6R)-5,10-methylene-5,6,7,8-tetrahydrofolate + NADP(+) = (6R)-5,10-methenyltetrahydrofolate + NADPH. It functions in the pathway one-carbon metabolism; tetrahydrofolate interconversion. Its function is as follows. Bifunctional mitochondrial folate-interconverting enzyme that has both NAD/NADP-dependent methylenetetrahydrofolate dehydrogenase and methenyltetrahydrofolate cyclohydrolase activities. The protein is Bifunctional methylenetetrahydrofolate dehydrogenase/cyclohydrolase 2, mitochondrial of Homo sapiens (Human).